The sequence spans 618 residues: DNA mismatch repair protein MutL (618 aa).

Residues 367–381 are compositionally biased toward low complexity; sequence EPTAAREPATPRYSG. The tract at residues 367–402 is disordered; that stretch reads EPTAAREPATPRYSGGASGGNGGRQSAGGWPHAQPG. Residues 382–392 show a composition bias toward gly residues; it reads GASGGNGGRQS.

This sequence belongs to the DNA mismatch repair MutL/HexB family.

This protein is involved in the repair of mismatches in DNA. It is required for dam-dependent methyl-directed DNA mismatch repair. May act as a 'molecular matchmaker', a protein that promotes the formation of a stable complex between two or more DNA-binding proteins in an ATP-dependent manner without itself being part of a final effector complex. In Salmonella heidelberg (strain SL476), this protein is DNA mismatch repair protein MutL.